The following is a 180-amino-acid chain: UPF0227 protein Ent638_1623 (180 aa).

This sequence belongs to the UPF0227 family.

The polypeptide is UPF0227 protein Ent638_1623 (Enterobacter sp. (strain 638)).